Reading from the N-terminus, the 396-residue chain is S-adenosylmethionine synthase (396 aa).

H16 lines the ATP pocket. D18 contributes to the Mg(2+) binding site. Residue E44 coordinates K(+). Residues E57 and Q100 each coordinate L-methionine. The tract at residues 100–110 is flexible loop; sequence QSPDIAQGVDR. ATP is bound by residues 167–169, 232–233, D241, 247–248, A264, and K268; these read DAK, RF, and RK. Residue D241 coordinates L-methionine. Position 272 (K272) interacts with L-methionine.

The protein belongs to the AdoMet synthase family. As to quaternary structure, homotetramer; dimer of dimers. The cofactor is Mg(2+). K(+) serves as cofactor.

It is found in the cytoplasm. It carries out the reaction L-methionine + ATP + H2O = S-adenosyl-L-methionine + phosphate + diphosphate. It functions in the pathway amino-acid biosynthesis; S-adenosyl-L-methionine biosynthesis; S-adenosyl-L-methionine from L-methionine: step 1/1. Functionally, catalyzes the formation of S-adenosylmethionine (AdoMet) from methionine and ATP. The overall synthetic reaction is composed of two sequential steps, AdoMet formation and the subsequent tripolyphosphate hydrolysis which occurs prior to release of AdoMet from the enzyme. The chain is S-adenosylmethionine synthase from Ralstonia nicotianae (strain ATCC BAA-1114 / GMI1000) (Ralstonia solanacearum).